The chain runs to 434 residues: Tol-Pal system protein TolB (434 aa).

Residues 1-24 (MKFSAYLTTLFIVLFSLFIQTVQA) form the signal peptide.

It belongs to the TolB family. The Tol-Pal system is composed of five core proteins: the inner membrane proteins TolA, TolQ and TolR, the periplasmic protein TolB and the outer membrane protein Pal. They form a network linking the inner and outer membranes and the peptidoglycan layer.

The protein localises to the periplasm. Part of the Tol-Pal system, which plays a role in outer membrane invagination during cell division and is important for maintaining outer membrane integrity. The polypeptide is Tol-Pal system protein TolB (Histophilus somni (strain 129Pt) (Haemophilus somnus)).